Reading from the N-terminus, the 372-residue chain is Flap endonuclease 1 (372 aa).

An N-domain region spans residues 1-105 (MGVKGLNQLI…GELEKRLLRR (105 aa)). Residue D34 coordinates Mg(2+). Positions 47 and 71 each coordinate DNA. 5 residues coordinate Mg(2+): D87, E159, E161, D180, and D182. The interval 123–254 (EVLKFEKRLV…ATAFKLIKEH (132 aa)) is I-domain. E159 lines the DNA pocket. Residues G232 and D234 each coordinate DNA. D234 contributes to the Mg(2+) binding site. Positions 339-347 (VQGRLDGFF) are interaction with PCNA. The segment covering 353–366 (DDKKRKADPKESKA) has biased composition (basic and acidic residues). A disordered region spans residues 353–372 (DDKKRKADPKESKASKKKKK).

Belongs to the XPG/RAD2 endonuclease family. FEN1 subfamily. In terms of assembly, interacts with PCNA. Three molecules of RAD27 bind to one PCNA trimer with each molecule binding to one PCNA monomer. PCNA stimulates the nuclease activity without altering cleavage specificity. The cofactor is Mg(2+). Post-translationally, phosphorylated. Phosphorylation upon DNA damage induces relocalization to the nuclear plasma.

It is found in the nucleus. Its subcellular location is the nucleolus. The protein resides in the nucleoplasm. The protein localises to the mitochondrion. Structure-specific nuclease with 5'-flap endonuclease and 5'-3' exonuclease activities involved in DNA replication and repair. During DNA replication, cleaves the 5'-overhanging flap structure that is generated by displacement synthesis when DNA polymerase encounters the 5'-end of a downstream Okazaki fragment. It enters the flap from the 5'-end and then tracks to cleave the flap base, leaving a nick for ligation. Also involved in the long patch base excision repair (LP-BER) pathway, by cleaving within the apurinic/apyrimidinic (AP) site-terminated flap. Acts as a genome stabilization factor that prevents flaps from equilibrating into structures that lead to duplications and deletions. Also possesses 5'-3' exonuclease activity on nicked or gapped double-stranded DNA, and exhibits RNase H activity. Also involved in replication and repair of rDNA and in repairing mitochondrial DNA. The sequence is that of Flap endonuclease 1 from Candida albicans (strain WO-1) (Yeast).